A 200-amino-acid polypeptide reads, in one-letter code: ADP-ribosylation factor-like protein 4A (200 aa).

Residue G2 is the site of N-myristoyl glycine attachment. Residues 27-34 (GLDCAGKT), 75-79 (DVGGQ), and 134-137 (NKQD) each bind GTP.

The protein belongs to the small GTPase superfamily. Arf family. Interacts with CYTH2. Interacts with KPNA2; the interaction is direct. Does not interact with ARL4A. Post-translationally, myristoylated. Expressed strongly in testis and liver. Expressed slightly in heart, spleen, lung and kidney.

It is found in the cell membrane. The protein localises to the cytoplasm. The protein resides in the nucleus. It localises to the nucleolus. Small GTP-binding protein which cycles between an inactive GDP-bound and an active GTP-bound form, and the rate of cycling is regulated by guanine nucleotide exchange factors (GEF) and GTPase-activating proteins (GAP). GTP-binding protein that does not act as an allosteric activator of the cholera toxin catalytic subunit. Recruits CYTH1, CYTH2, CYTH3 and CYTH4 to the plasma membrane in GDP-bound form. This chain is ADP-ribosylation factor-like protein 4A (Arl4a), found in Mus musculus (Mouse).